Reading from the N-terminus, the 222-residue chain is Thiamine-phosphate synthase (222 aa).

4-amino-2-methyl-5-(diphosphooxymethyl)pyrimidine is bound by residues 44-48 (QFREK) and Asn-79. Mg(2+) is bound by residues Asp-80 and Asp-99. Residue Ser-117 participates in 4-amino-2-methyl-5-(diphosphooxymethyl)pyrimidine binding. 143 to 145 (TET) contributes to the 2-[(2R,5Z)-2-carboxy-4-methylthiazol-5(2H)-ylidene]ethyl phosphate binding site. Lys-146 contacts 4-amino-2-methyl-5-(diphosphooxymethyl)pyrimidine. 2-[(2R,5Z)-2-carboxy-4-methylthiazol-5(2H)-ylidene]ethyl phosphate is bound by residues Gly-175 and 195 to 196 (IS).

This sequence belongs to the thiamine-phosphate synthase family. As to quaternary structure, monomer. Mg(2+) serves as cofactor.

The catalysed reaction is 2-[(2R,5Z)-2-carboxy-4-methylthiazol-5(2H)-ylidene]ethyl phosphate + 4-amino-2-methyl-5-(diphosphooxymethyl)pyrimidine + 2 H(+) = thiamine phosphate + CO2 + diphosphate. It catalyses the reaction 2-(2-carboxy-4-methylthiazol-5-yl)ethyl phosphate + 4-amino-2-methyl-5-(diphosphooxymethyl)pyrimidine + 2 H(+) = thiamine phosphate + CO2 + diphosphate. The enzyme catalyses 4-methyl-5-(2-phosphooxyethyl)-thiazole + 4-amino-2-methyl-5-(diphosphooxymethyl)pyrimidine + H(+) = thiamine phosphate + diphosphate. The protein operates within cofactor biosynthesis; thiamine diphosphate biosynthesis; thiamine phosphate from 4-amino-2-methyl-5-diphosphomethylpyrimidine and 4-methyl-5-(2-phosphoethyl)-thiazole: step 1/1. Condenses 4-methyl-5-(beta-hydroxyethyl)thiazole monophosphate (THZ-P) and 2-methyl-4-amino-5-hydroxymethyl pyrimidine pyrophosphate (HMP-PP) to form thiamine monophosphate (TMP). Is also able to use the 2-methoxy analog MeO-HMP-PP, as substrate in vitro, but not the 2-trifluoromethyl analog CF(3)-HMP-PP. This chain is Thiamine-phosphate synthase (thiE), found in Bacillus subtilis (strain 168).